The chain runs to 198 residues: Nucleoid occlusion factor SlmA (198 aa).

One can recognise an HTH tetR-type domain in the interval 10–70 (NRREEILQSL…SLIEFIEDSL (61 aa)). Positions 33–52 (TTAKLAASVGVSEAALYRHF) form a DNA-binding region, H-T-H motif. A coiled-coil region spans residues 117–144 (EQDRLQGRINQLFERIEAQLRQVLREKR).

Belongs to the nucleoid occlusion factor SlmA family. Homodimer. Interacts with FtsZ.

It localises to the cytoplasm. It is found in the nucleoid. Functionally, required for nucleoid occlusion (NO) phenomenon, which prevents Z-ring formation and cell division over the nucleoid. Acts as a DNA-associated cell division inhibitor that binds simultaneously chromosomal DNA and FtsZ, and disrupts the assembly of FtsZ polymers. SlmA-DNA-binding sequences (SBS) are dispersed on non-Ter regions of the chromosome, preventing FtsZ polymerization at these regions. This is Nucleoid occlusion factor SlmA from Citrobacter koseri (strain ATCC BAA-895 / CDC 4225-83 / SGSC4696).